Consider the following 309-residue polypeptide: Olfactory receptor 2G3 (309 aa).

Topologically, residues 1–25 are extracellular; that stretch reads MGLGNESSLMDFILLGFSDHPRLEA. N-linked (GlcNAc...) asparagine glycosylation occurs at Asn-5. A helical transmembrane segment spans residues 26 to 49; it reads VLFVFVLFFYLLTLVGNFTIIIIS. The Cytoplasmic segment spans residues 50–57; sequence YLDPPLHT. The helical transmembrane segment at 58-79 threads the bilayer; that stretch reads PMYFFLSNLSLLDICFTTSLAP. The Extracellular portion of the chain corresponds to 80–100; that stretch reads QTLVNLQRPKKTITYGGCVAQ. Cys-97 and Cys-189 are disulfide-bonded. The chain crosses the membrane as a helical span at residues 101–120; sequence LYISLALGSTECILLADMAL. Topologically, residues 121–139 are cytoplasmic; sequence DRYIAVCKPLHYVVIMNPR. Residues 140-158 form a helical membrane-spanning segment; that stretch reads LCQQLASISWLSGLASSLI. At 159–195 the chain is on the extracellular side; that stretch reads HATFTLQLPLCGNHRLDHFICEVPALLKLACVDTTVN. The helical transmembrane segment at 196-219 threads the bilayer; the sequence is ELVLFVVSVLFVVIPPALISISYG. At 220–236 the chain is on the cytoplasmic side; sequence FITQAVLRIKSVEARHK. The helical transmembrane segment at 237–259 threads the bilayer; sequence AFSTCSSHLTVVIIFYGTIIYVY. The Extracellular portion of the chain corresponds to 260–272; sequence LQPSDSYAQDQGK. The helical transmembrane segment at 273-292 threads the bilayer; sequence FISLFYTMVTPTLNPIIYTL. Topologically, residues 293-309 are cytoplasmic; that stretch reads RNKDMKEALRKLLSGKL.

Belongs to the G-protein coupled receptor 1 family.

It localises to the cell membrane. Functionally, odorant receptor. The polypeptide is Olfactory receptor 2G3 (OR2G3) (Homo sapiens (Human)).